The following is a 608-amino-acid chain: Extracellular metalloproteinase 5 (608 aa).

A signal peptide spans 1–20 (MHGLLLAAAGLLSLPLHVIA). The propeptide occupies 21 to 244 (HPQPSTNLAG…VHNVVDYVSH (224 aa)). Asn285 carries N-linked (GlcNAc...) asparagine glycosylation. Residue His427 coordinates Zn(2+). Glu428 is an active-site residue. His431 is a binding site for Zn(2+). Asn591 is a glycosylation site (N-linked (GlcNAc...) asparagine).

It belongs to the peptidase M36 family. Zn(2+) is required as a cofactor.

It localises to the secreted. Functionally, secreted metalloproteinase probably acting as a virulence factor. This chain is Extracellular metalloproteinase 5 (MEP5), found in Trichophyton tonsurans (Scalp ringworm fungus).